Reading from the N-terminus, the 410-residue chain is Dihydrolipoyllysine-residue acetyltransferase component of pyruvate dehydrogenase complex (410 aa).

Positions 1–69 (MPDIGTDLVE…TTGSLIAILN (69 aa)) constitute a Lipoyl-binding domain. Lysine 35 carries the post-translational modification N6-lipoyllysine. A disordered region spans residues 81–100 (SSSYSFKNSKNTSTNSNLGN). One can recognise a Peripheral subunit-binding (PSBD) domain in the interval 113-150 (HATPTVRRLARKFDIKLENITGTGRKGRILKEDVISYK). Histidine 383 is a catalytic residue.

Belongs to the 2-oxoacid dehydrogenase family. As to quaternary structure, forms a 24-polypeptide structural core with octahedral symmetry. (R)-lipoate serves as cofactor.

The catalysed reaction is N(6)-[(R)-dihydrolipoyl]-L-lysyl-[protein] + acetyl-CoA = N(6)-[(R)-S(8)-acetyldihydrolipoyl]-L-lysyl-[protein] + CoA. Functionally, the pyruvate dehydrogenase complex catalyzes the overall conversion of pyruvate to acetyl-CoA and CO(2). It contains multiple copies of three enzymatic components: pyruvate dehydrogenase (E1), dihydrolipoamide acetyltransferase (E2) and lipoamide dehydrogenase (E3). In Buchnera aphidicola subsp. Baizongia pistaciae (strain Bp), this protein is Dihydrolipoyllysine-residue acetyltransferase component of pyruvate dehydrogenase complex (aceF).